A 172-amino-acid polypeptide reads, in one-letter code: Ribosome maturation factor RimM (172 aa).

Positions 95-168 constitute a PRC barrel domain; the sequence is QEGEFYYHQI…CVDVELMEGL (74 aa).

This sequence belongs to the RimM family. As to quaternary structure, binds ribosomal protein uS19.

It localises to the cytoplasm. In terms of biological role, an accessory protein needed during the final step in the assembly of 30S ribosomal subunit, possibly for assembly of the head region. Essential for efficient processing of 16S rRNA. May be needed both before and after RbfA during the maturation of 16S rRNA. It has affinity for free ribosomal 30S subunits but not for 70S ribosomes. The protein is Ribosome maturation factor RimM of Streptococcus pyogenes serotype M49 (strain NZ131).